A 214-amino-acid chain; its full sequence is Octanoyltransferase (214 aa).

Residues 34–214 (GVQKELVWLL…KFNEIFSNFN (181 aa)) form the BPL/LPL catalytic domain. Residues 73–80 (RGGKYTYH), 145–147 (AFG), and 158–160 (GVS) each bind substrate. C176 (acyl-thioester intermediate) is an active-site residue.

The protein belongs to the LipB family.

The protein localises to the cytoplasm. It carries out the reaction octanoyl-[ACP] + L-lysyl-[protein] = N(6)-octanoyl-L-lysyl-[protein] + holo-[ACP] + H(+). It participates in protein modification; protein lipoylation via endogenous pathway; protein N(6)-(lipoyl)lysine from octanoyl-[acyl-carrier-protein]: step 1/2. Functionally, catalyzes the transfer of endogenously produced octanoic acid from octanoyl-acyl-carrier-protein onto the lipoyl domains of lipoate-dependent enzymes. Lipoyl-ACP can also act as a substrate although octanoyl-ACP is likely to be the physiological substrate. This is Octanoyltransferase from Ehrlichia chaffeensis (strain ATCC CRL-10679 / Arkansas).